Consider the following 65-residue polypeptide: Large ribosomal subunit protein uL29 (65 aa).

The protein belongs to the universal ribosomal protein uL29 family.

This Buchnera aphidicola subsp. Schizaphis graminum (strain Sg) protein is Large ribosomal subunit protein uL29.